The chain runs to 356 residues: tRNA (guanine(26)-N(2))-dimethyltransferase (356 aa).

The Trm1 methyltransferase domain maps to 5 to 352 (VLRREGTVEF…VSAGEVERVL (348 aa)). Arg-40, Arg-67, Asp-85, Asp-111, and Ala-112 together coordinate S-adenosyl-L-methionine.

This sequence belongs to the class I-like SAM-binding methyltransferase superfamily. Trm1 family.

The enzyme catalyses guanosine(26) in tRNA + 2 S-adenosyl-L-methionine = N(2)-dimethylguanosine(26) in tRNA + 2 S-adenosyl-L-homocysteine + 2 H(+). Dimethylates a single guanine residue at position 26 of a number of tRNAs using S-adenosyl-L-methionine as donor of the methyl groups. In Pyrobaculum arsenaticum (strain DSM 13514 / JCM 11321 / PZ6), this protein is tRNA (guanine(26)-N(2))-dimethyltransferase.